A 338-amino-acid polypeptide reads, in one-letter code: Dehydrogenase/reductase SDR family member 7 (338 aa).

The signal sequence occupies residues 1–28 (MSWELLLWLLALCALILPLVQLLRFLRA). Residues Ser-60 and Ile-62 each coordinate NAD(+). Ser-190 provides a ligand contact to substrate. NAD(+) is bound by residues Tyr-203, Lys-207, and Ser-239. The active-site Proton acceptor is the Tyr-203.

Belongs to the short-chain dehydrogenases/reductases (SDR) family.

The protein resides in the endoplasmic reticulum membrane. It catalyses the reaction all-trans-retinol + NADP(+) = all-trans-retinal + NADPH + H(+). The enzyme catalyses 5alpha-androstane-3alpha,17beta-diol + NADP(+) = 17beta-hydroxy-5alpha-androstan-3-one + NADPH + H(+). In terms of biological role, NADPH-dependent oxidoreductase which catalyzes the reduction of a variety of compounds bearing carbonyl groups including steroids, retinoids and xenobiotics. Catalyzes the reduction/inactivation of 5alpha-dihydrotestosterone to 3alpha-androstanediol, with a possible role in the modulation of androgen receptor function. Involved in the reduction of all-trans-retinal to all-trans-retinol. Converts cortisone to 20beta-dihydrocortisone in vitro, although the physiological relevance of this activity is questionable. Reduces exogenous compounds such as quinones (1,2-naphtoquinone, 9,10-phenantrenequinone and benzoquinone) and other xenobiotics (alpha-diketones) in vitro, suggesting a role in the biotransformation of xenobiotics with carbonyl group. A dehydrogenase activity has not been detected so far. May play a role as tumor suppressor. The sequence is that of Dehydrogenase/reductase SDR family member 7 from Mus musculus (Mouse).